The chain runs to 142 residues: Maximins y/Hv type 1 (142 aa).

Residues 1 to 18 form the signal peptide; that stretch reads MNFKYIVAVSFLIASGYA. Residues 19-43 constitute a propeptide that is removed on maturation; it reads RSEENDVQSLSQREVLEEESLREIR. Phenylalanine 68 is modified (phenylalanine amide). Positions 72–121 are excised as a propeptide; the sequence is TAEDHEVMKRLEAVMRDLDSLDHPEEASERETRGFNQEEIANLFTKKEKR. Isoleucine 141 is modified (isoleucine amide).

The protein belongs to the bombinin family. In terms of tissue distribution, expressed by the skin glands.

Its subcellular location is the secreted. Maximin-y shows antimicrobial activity against bacteria and against the fungus C.albicans. It has little hemolytic activity. In terms of biological role, maximin-Hv shows antimicrobial activity against bacteria and against the fungus C.albicans. Shows strong hemolytic activity. This is Maximins y/Hv type 1 from Bombina maxima (Giant fire-bellied toad).